The following is a 682-amino-acid chain: Amphiphysin (682 aa).

Coiled-coil stretches lie at residues 10–84 and 144–191; these read AKNV…LHEV and DYDS…QEEL. Residues 24-240 enclose the BAR domain; it reads VLQKLGKADE…MTKLGDQHAD (217 aa). Disordered stretches follow at residues 244-310, 446-470, 501-530, and 561-606; these read TIQG…PKLT, ILAE…ETTG, GAVR…QEKV, and AAAE…ASDM. Over residues 261–274 the composition is skewed to pro residues; the sequence is PSPPEEVSPLPSPT. Over residues 503 to 527 the composition is skewed to basic and acidic residues; the sequence is VRTEQEAAAEGDKPQGEEKDVDVSQ. Over residues 567-596 the composition is skewed to polar residues; that stretch reads TQGTDSETSQIGSEQKATEEIQTTPSQDQP. The 74-residue stretch at 609–682 folds into the SH3 domain; sequence GFLFKVEVLH…FPENFTRHLE (74 aa).

In terms of assembly, heterodimer with BIN1. Binds SH3GLB1. Is abundant in the forebrain and cerebellum. It is also found in the adrenal gland, anterior and posterior pituitary.

It localises to the cytoplasmic vesicle. It is found in the secretory vesicle. Its subcellular location is the synaptic vesicle membrane. The protein localises to the cytoplasm. The protein resides in the cytoskeleton. May participate in mechanisms of regulated exocytosis in synapses and certain endocrine cell types. May control the properties of the membrane associated cytoskeleton. The sequence is that of Amphiphysin (AMPH) from Gallus gallus (Chicken).